We begin with the raw amino-acid sequence, 180 residues long: tRNA (cytidine(56)-2'-O)-methyltransferase (180 aa).

S-adenosyl-L-methionine contacts are provided by residues Leu-84 and 112–116 (GAEKV).

It belongs to the aTrm56 family. As to quaternary structure, homodimer.

Its subcellular location is the cytoplasm. It catalyses the reaction cytidine(56) in tRNA + S-adenosyl-L-methionine = 2'-O-methylcytidine(56) in tRNA + S-adenosyl-L-homocysteine + H(+). Functionally, specifically catalyzes the AdoMet-dependent 2'-O-ribose methylation of cytidine at position 56 in tRNAs. The chain is tRNA (cytidine(56)-2'-O)-methyltransferase from Haloarcula marismortui (strain ATCC 43049 / DSM 3752 / JCM 8966 / VKM B-1809) (Halobacterium marismortui).